Reading from the N-terminus, the 340-residue chain is Ketol-acid reductoisomerase (NADP(+)) (340 aa).

One can recognise a KARI N-terminal Rossmann domain in the interval 3–182 (VQMEYEKDVK…GAARVGLLET (180 aa)). NADP(+)-binding positions include 26 to 29 (YGSQ), Arg-49, Ser-53, and 83 to 86 (DEIQ). His-108 is an active-site residue. Gly-134 lines the NADP(+) pocket. Positions 183–328 (TYKEETEEDL…AELRKAMPFV (146 aa)) constitute a KARI C-terminal knotted domain. Mg(2+) is bound by residues Asp-191, Glu-195, Glu-227, and Glu-231. Ser-252 contacts substrate.

Belongs to the ketol-acid reductoisomerase family. Requires Mg(2+) as cofactor.

The catalysed reaction is (2R)-2,3-dihydroxy-3-methylbutanoate + NADP(+) = (2S)-2-acetolactate + NADPH + H(+). It catalyses the reaction (2R,3R)-2,3-dihydroxy-3-methylpentanoate + NADP(+) = (S)-2-ethyl-2-hydroxy-3-oxobutanoate + NADPH + H(+). It participates in amino-acid biosynthesis; L-isoleucine biosynthesis; L-isoleucine from 2-oxobutanoate: step 2/4. Its pathway is amino-acid biosynthesis; L-valine biosynthesis; L-valine from pyruvate: step 2/4. Functionally, involved in the biosynthesis of branched-chain amino acids (BCAA). Catalyzes an alkyl-migration followed by a ketol-acid reduction of (S)-2-acetolactate (S2AL) to yield (R)-2,3-dihydroxy-isovalerate. In the isomerase reaction, S2AL is rearranged via a Mg-dependent methyl migration to produce 3-hydroxy-3-methyl-2-ketobutyrate (HMKB). In the reductase reaction, this 2-ketoacid undergoes a metal-dependent reduction by NADPH to yield (R)-2,3-dihydroxy-isovalerate. This chain is Ketol-acid reductoisomerase (NADP(+)), found in Streptococcus thermophilus (strain CNRZ 1066).